Here is a 317-residue protein sequence, read N- to C-terminus: Protein PXR1 (317 aa).

In terms of domain architecture, G-patch spans 25–79 (TTGYGHRIMSAQGWTPGAFLGAPGAAHSSCYTAASASHIRVVLKDDTLGLGARPR). The disordered stretch occupies residues 152 to 268 (EQANKDDSSD…PNKQSAQQST (117 aa)). Basic and acidic residues predominate over residues 154–170 (ANKDDSSDPKSRQETTQ). The span at 171-182 (KRPKKEKRKEKS) shows a compositional bias: basic residues. A compositionally biased stretch (polar residues) spans 192 to 219 (RSISSKPERGTINSANQTSDDESTNIVP). Over residues 224–236 (SRKKEKKKKSKKR) the composition is skewed to basic residues.

This sequence belongs to the PINX1 family.

The protein localises to the nucleus. It is found in the nucleolus. In terms of biological role, involved in rRNA-processing at A0, A1 and A2 sites and negatively regulates telomerase. This chain is Protein PXR1 (PXR1), found in Coccidioides immitis (strain RS) (Valley fever fungus).